The following is a 474-amino-acid chain: MTTVPKNAVAKTLYQKVWDAHVVATPEGEAPIIYVDRHLVHEVTSPQAFSGLKVAGRKLRAPEKTFATMDHNTSTRSASLDALSPMARTQVETLAQNCKDFGVRLYDIHHPNQGIVHVMGPELGITLPGTVIVCGDSHTATHGAFGALAFGIGTSEVEHVLATQTLRQLKAKTMKIEVRGHVSDGVTAKDIVLAIIGKIGMDGGTGYVVEFCGEAIEALSMEGRMTVCNMAIEMGAKAGMVAPDQTTFDYLAGREFAPKGEDWAEAVAYWQAIKTDDGAVFDAVVELDAADIAPQLTWGTNPGQVVAIDGKVPNPLDEANPSTRASMEKALEYIGLSAGTPMTDISINKVFIGSCTNSRIEDLRSAAVHAKGRKVASGVTAIVVPGSGQVKAQAEAEGLDKIFIEAGFEWRLPGCSMCLAMNDDRLEAGDRCASTSNRNFEGRQGRGSRTHLVSPAMAAAAAVAGHFVDIRKPY.

Residues C355, C415, and C418 each contribute to the [4Fe-4S] cluster site.

Belongs to the aconitase/IPM isomerase family. LeuC type 1 subfamily. In terms of assembly, heterodimer of LeuC and LeuD. [4Fe-4S] cluster is required as a cofactor.

It carries out the reaction (2R,3S)-3-isopropylmalate = (2S)-2-isopropylmalate. Its pathway is amino-acid biosynthesis; L-leucine biosynthesis; L-leucine from 3-methyl-2-oxobutanoate: step 2/4. Functionally, catalyzes the isomerization between 2-isopropylmalate and 3-isopropylmalate, via the formation of 2-isopropylmaleate. This is 3-isopropylmalate dehydratase large subunit from Shewanella sp. (strain W3-18-1).